We begin with the raw amino-acid sequence, 171 residues long: MLP-like protein 31 (171 aa).

It belongs to the MLP family.

The protein is MLP-like protein 31 (MLP31) of Arabidopsis thaliana (Mouse-ear cress).